A 480-amino-acid chain; its full sequence is Proline--tRNA ligase (480 aa).

Belongs to the class-II aminoacyl-tRNA synthetase family. ProS type 3 subfamily. In terms of assembly, homodimer.

It localises to the cytoplasm. It carries out the reaction tRNA(Pro) + L-proline + ATP = L-prolyl-tRNA(Pro) + AMP + diphosphate. Catalyzes the attachment of proline to tRNA(Pro) in a two-step reaction: proline is first activated by ATP to form Pro-AMP and then transferred to the acceptor end of tRNA(Pro). The protein is Proline--tRNA ligase of Roseiflexus sp. (strain RS-1).